The following is a 2422-amino-acid chain: MATGEHTPDDPLLRGKRRQDLQEMLREVGLDVEYWLPKLQEHLGVTCAQALQHLDKNNLKKLKSQTQHPWEKLLNLSHSKSLSALLQESQVERAKRKQKQAEQALQELRDLLTEGKQRQEEAVRTREAELRQAMDIPEEYWPSPEEPLRELMENLQRQLNLMKWTLCHRQNLPDRDVVRWASGGLALQGIYKASHQRGLTEKREELLSVPKEFLLLGPQQGTQMKTKEFTSPQAEFMFTQMVEKLGFRLTTSAKDGNWGFSLEAGLDHSKHPESKETQQSSSENSYFCSTKFSYIPLASCHFPIDQLQLSKPAVQELKCIEELLSQTTNPDRFSLLRHRIINFFHRFGSHVNQGPLHLGGIYWWKAISEGYCTEQLAEVRQQSAEALDIFIRDSYSGFGVKVAAGVNVSDSHSKTATQTKTSQNLQTKVQLSVAQTGGPPEADGLVQWKAGLIASNQTWCVIDRGLQLVPVWDIILSSHRSNFKDPLQVANFLKDSYTALTSITAQIQNGEELLSAGKEARVFLEDVKSWEVSDPEEQLKKLINFMKMLSQKLKSYDTWINICLTDSLQNFLVNTINFCKKSSIYKTKCIKSHLRSLLDPHIYRVTNFPQAHFIMQWIFQSDSEQEQVNISQFSQLIEILKETQNNLMEVKVKSESPETVEEAQRKSTYEVSLALSCFLNYLQKTEQTDTQLLLLSIAAAAGYHVINNTFQSLLGCDELSFLLDEMQTAQNKYQELKNICSYRAQAFLVLTGLTATVGDTAISSEEKTQRMSLMRHHMGQSLSKEVAHVLTKPGADHDWENLEKDLRLLINGDYEEVTISSLQMEEVSKQSLFYGKKQPHEPHDNENNKWEMIKNGAFLDLLQHLGLEHYYPKKLSKANFHLIYKTSVYNTQPSSEQELPFYFLQKLLMMDYELRYLVFKDDRNTEHQVHPNASDQEDEAFDPYENFFEDSDSPTKSSSTEPSPHIHPVDIQMTIFHCADNFARQYILAKLSTCQFALPLLVPNPCTSQIEFSLWSLRQITRSWQEARKSPKGKNYYKNQQMCCVSTSIVSFVRVGNGLSASKSQIMNCLLSKRKHDVFFHRHCTGSRKDCLLMGGMVEICWFCPGGEDEDRFDNCVTFTNLHGDAKEHEQQLSFLKEVSTVIVVLMSASDDNEGNRKIVRNLWQSSRPLICLLDDKEATMTNISGQRMRMGIKNRNEAELTEELTTTIRHLLELSDTALSLEDCSQIAHQQGFLIDEDQRDCKEAKEKAQALMAFLGKMKLSQIKEKLLPLQGQLWHHWCKKDKELYHLREKGNQSIEQHKSEIETDKQIIRHEQLARALPLNDLMQSVLQFLQEHSEIHTKLYFLQWLSVFLDKLTAGHLEELHEKQKYWWSLVQTVKQKAPNSHSLICLQSEIEAISTEISDCTLGIEQLIREVGQIYEALEEASSIKKIFFSLPQIAADLMISGVPIELMDGDAAYVPLTWVAAVFDKVSEKLGDKRLFVLSILGLQSSGKSTVLNALFGLQFTVSAGKCTQGAYMQLLKVEETFTEELGFDFVLAVDTEGLRAPEHSNKSKDRDNELVTFVIGLANLTLINIFGENPSEMQDILQIVVQAFLRMKQVKIFPSCLFVHQNVGEATATDQTMDGRRRLEQKLDEMAAIAAEQEQCLDVTCFSDVIRFDVNTHVYYFAHLWDGNPPMAPPNPRYSHNVQQLKSRILMTATQESRGNIMKISDVKSRVQDLWRGLMNENFIFSFRNTQEVMAMNKLETMYNHWTWELRSHVLGLQNQLINQIQNGKIQTLEASTFEVLVTEKYEVVKQELEKYFNEGPCSKILIQCKANFENKLIVLKEKLISDSKRQANELISFKNQSQERLNKKKTDYEKELLEKSRKLALTVKGKELSEEELHEKFNQLWKKWVCDVSTTLPQVTEPDIDLDSENILWEYFKNKTNVVGLLTNSAEKFQINYDKHIKVNKKYNHIPMTLTVFEKEFINMTTDYIVSRFNKIINNMWKQQCGYNPNYFHEILKTIEEEVKSASTQKRYTFTNTFIIDLCVCLFQRARENFKEMHRAFKRANDPVNYLESKKDDFFTSFKISCQGATSIKTFVDVLWYKLTPAVSTTIWEDMTFKIAGDMRATCPAFNGNRTNLEKHILFSLAEEENFDNYWEYLHNSKSFFRSYIKNHIKRYCSDNGGEKMKTFFEKSLIDIKNTILSAIHESTSVAKDKSSTASEWLDLFCDCLGCNLIFPRRDLISIEHQEIKHTEFLKEAMSAALDLTMKKIEQNYSSKPIEAMVSKIEKMLSEHLCGCWKQCPSCGAICTNTIPTHEGDHSVPFHRPQAVNGEEWYETDDFVIDCCTSLVASDCLLVLRDGRNFPFKNYRQAGGDYAMWSITPDTSIQLYWKWFVSHFRSNLEEKYQKKFAGKGKIPNAWAKITKQDVLEDLKKQ.

A disordered region spans residues Glu945–His965. Residues Pro954–Ser963 show a composition bias toward low complexity. In terms of domain architecture, VLIG-type G spans Asp1479 to Gln1720. Residues Gly1489–Ser1496, Asp1542–Gly1545, and Thr1619–Asp1622 contribute to the GTP site.

It belongs to the TRAFAC class dynamin-like GTPase superfamily. Very large inducible GTPase (VLIG) family.

It is found in the cytoplasm. The protein localises to the cytosol. Its subcellular location is the nucleus. The chain is Interferon-induced very large GTPase 1 (GVINP1) from Homo sapiens (Human).